The sequence spans 591 residues: MTQGKIIKVSGPLVIASGMQEANIQDICRVGKLGLIGEIIEMRRDQASIQVYEETSGLGPGEPVVTTGEPLSVELGPGLISQMFDGIQRPLDRFKLATHNDFLVRGVEVPSLDRDIKWHFDSTIAIGQKVSTGDILGTVKETEVVNHKIMVPYGVSGXVVSIASGDFTIDEVVYEIKKLDGSFYKGTLMQKWPVRKARPVSKRLIPEEPLITGQRVIDAFFPVTKGGAAAVPGPFGAGKTVVQHQVAKFANVDIVIYVGCGERGNEMTDVLNEFPELIDPNTGQSIMQRTVLIANTSNMPVAAREASIYTGITMAEYFRDMGYSVAIMADSTSRWAEALREMSGRLEEMPGDEGYPAYLGSRIAEYYERAGRSQVLGLPEREGTITAIGAVSPPGGDISEPVTQNTLRIVKVFWGLDAPLAQRRHFPAINWLTSYSLYKDSVGTYIDGKEKTDWNSKITRAMNYLQRESSLEEIVRLVGIDSLSDNERLTMEIAKQIREDYLQQNAFDSVDTFTSFAKQEAMLSNILTFADQANHALELGSYFTEIMEGTVAVRDRMARSKYVSEDRLDEIKIISNEITHQIHLILETGGL.

233 to 240 (GPFGAGKT) contacts ATP.

Belongs to the ATPase alpha/beta chains family.

It carries out the reaction ATP + H2O + 4 H(+)(in) = ADP + phosphate + 5 H(+)(out). Functionally, produces ATP from ADP in the presence of a proton gradient across the membrane. The V-type alpha chain is a catalytic subunit. The sequence is that of V-type ATP synthase alpha chain from Streptococcus pneumoniae serotype 19F (strain G54).